A 432-amino-acid chain; its full sequence is Serine--tRNA ligase (432 aa).

236 to 238 contacts L-serine; it reads TSE. 267-269 provides a ligand contact to ATP; the sequence is RSE. Glu-290 is an L-serine binding site. 354-357 provides a ligand contact to ATP; that stretch reads EISS. Ser-390 contacts L-serine.

Belongs to the class-II aminoacyl-tRNA synthetase family. Type-1 seryl-tRNA synthetase subfamily. In terms of assembly, homodimer. The tRNA molecule binds across the dimer.

The protein resides in the cytoplasm. It catalyses the reaction tRNA(Ser) + L-serine + ATP = L-seryl-tRNA(Ser) + AMP + diphosphate + H(+). The catalysed reaction is tRNA(Sec) + L-serine + ATP = L-seryl-tRNA(Sec) + AMP + diphosphate + H(+). It participates in aminoacyl-tRNA biosynthesis; selenocysteinyl-tRNA(Sec) biosynthesis; L-seryl-tRNA(Sec) from L-serine and tRNA(Sec): step 1/1. In terms of biological role, catalyzes the attachment of serine to tRNA(Ser). Is also able to aminoacylate tRNA(Sec) with serine, to form the misacylated tRNA L-seryl-tRNA(Sec), which will be further converted into selenocysteinyl-tRNA(Sec). The sequence is that of Serine--tRNA ligase from Pseudoalteromonas atlantica (strain T6c / ATCC BAA-1087).